A 378-amino-acid chain; its full sequence is Dof zinc finger protein 1 (378 aa).

Residues Gly-28 to Pro-38 show a composition bias toward low complexity. The disordered stretch occupies residues Gly-28–Asn-79. Residues Ala-45 to Ala-63 show a composition bias toward gly residues. Positions Thr-66–Ala-77 are enriched in basic and acidic residues. The Dof-type zinc finger occupies Leu-78 to Arg-132. Cys-80, Cys-83, Cys-105, and Cys-108 together coordinate Zn(2+). 3 disordered regions span residues Gly-116–Ala-148, Ser-203–Gly-222, and Leu-316–Trp-378. A compositionally biased stretch (low complexity) spans Ser-133–Ala-148. 3 stretches are compositionally biased toward gly residues: residues Gly-323–Gly-338, Ala-350–Asp-361, and Met-369–Trp-378.

It localises to the nucleus. Functionally, transcription factor that may transactivate seed storage protein genes in developing seeds. This chain is Dof zinc finger protein 1, found in Oryza sativa subsp. japonica (Rice).